Here is a 287-residue protein sequence, read N- to C-terminus: Bifunctional protein FolD (287 aa).

NADP(+) is bound by residues 160-162 (GRS), Ser189, and Thr230.

It belongs to the tetrahydrofolate dehydrogenase/cyclohydrolase family. As to quaternary structure, homodimer.

It catalyses the reaction (6R)-5,10-methylene-5,6,7,8-tetrahydrofolate + NADP(+) = (6R)-5,10-methenyltetrahydrofolate + NADPH. It carries out the reaction (6R)-5,10-methenyltetrahydrofolate + H2O = (6R)-10-formyltetrahydrofolate + H(+). It functions in the pathway one-carbon metabolism; tetrahydrofolate interconversion. Functionally, catalyzes the oxidation of 5,10-methylenetetrahydrofolate to 5,10-methenyltetrahydrofolate and then the hydrolysis of 5,10-methenyltetrahydrofolate to 10-formyltetrahydrofolate. The sequence is that of Bifunctional protein FolD from Chlamydia muridarum (strain MoPn / Nigg).